The chain runs to 153 residues: MSQARTLHRLIAPAVEALGFELVGCELFRRGATTILQVFVDKPGGIGLDECAKVSRQISAVLDVEDPIRGRYTLEVSSPGLERPLYTANHYRRFIGNKAKIRLREPREGQRQFRGMIVAVDNEEQVTLQLDNKILKVSLGEIEKANLITDFEG.

Belongs to the RimP family.

It localises to the cytoplasm. In terms of biological role, required for maturation of 30S ribosomal subunits. This is Ribosome maturation factor RimP from Coxiella burnetii (strain CbuG_Q212) (Coxiella burnetii (strain Q212)).